We begin with the raw amino-acid sequence, 302 residues long: 4-hydroxy-tetrahydrodipicolinate synthase (302 aa).

Residue threonine 46 coordinates pyruvate. The active-site Proton donor/acceptor is tyrosine 134. The active-site Schiff-base intermediate with substrate is lysine 162. Valine 204 provides a ligand contact to pyruvate.

It belongs to the DapA family. In terms of assembly, homotetramer; dimer of dimers.

It localises to the cytoplasm. It catalyses the reaction L-aspartate 4-semialdehyde + pyruvate = (2S,4S)-4-hydroxy-2,3,4,5-tetrahydrodipicolinate + H2O + H(+). It functions in the pathway amino-acid biosynthesis; L-lysine biosynthesis via DAP pathway; (S)-tetrahydrodipicolinate from L-aspartate: step 3/4. Its function is as follows. Catalyzes the condensation of (S)-aspartate-beta-semialdehyde [(S)-ASA] and pyruvate to 4-hydroxy-tetrahydrodipicolinate (HTPA). The protein is 4-hydroxy-tetrahydrodipicolinate synthase of Xanthomonas campestris pv. campestris (strain ATCC 33913 / DSM 3586 / NCPPB 528 / LMG 568 / P 25).